The sequence spans 385 residues: UPF0284 protein P9301_04631 (385 aa).

This sequence belongs to the UPF0284 family.

This is UPF0284 protein P9301_04631 from Prochlorococcus marinus (strain MIT 9301).